A 281-amino-acid polypeptide reads, in one-letter code: UPF0750 membrane protein YvjA (281 aa).

5 consecutive transmembrane segments (helical) span residues 14–34 (YVYILIGAAITAVSFNVFLLP), 56–76 (AAYVQWIINIPLFIAGVILLG), 77–97 (GKFGLKTLAGSVFLPLVVFLT), 108–128 (LLAAIFGGVGIGIGIGIVYLG), and 149–169 (SLGKCLAIIDGMIVVTAMIVF).

The protein belongs to the UPF0750 family.

Its subcellular location is the cell membrane. The chain is UPF0750 membrane protein YvjA (yvjA) from Bacillus subtilis (strain 168).